A 172-amino-acid polypeptide reads, in one-letter code: Female-specific lacrimal gland protein (172 aa).

The N-terminal stretch at 1 to 16 (MVKFLLLALALGVSCA) is a signal peptide. 2 cysteine pairs are disulfide-bonded: cysteine 60-cysteine 64 and cysteine 79-cysteine 170.

The protein belongs to the calycin superfamily. Lipocalin family. Expressed in the lacrimal gland from where it is secreted into tears (at protein level).

The protein resides in the secreted. The sequence is that of Female-specific lacrimal gland protein from Mesocricetus auratus (Golden hamster).